We begin with the raw amino-acid sequence, 233 residues long: Adenosine 5'-phosphosulfate reductase 1 (233 aa).

Cys-120, Cys-121, Cys-203, and Cys-206 together coordinate [4Fe-4S] cluster. Catalysis depends on Cys-229, which acts as the Nucleophile; cysteine thiosulfonate intermediate.

This sequence belongs to the PAPS reductase family. CysH subfamily. Requires [4Fe-4S] cluster as cofactor.

It localises to the cytoplasm. The catalysed reaction is [thioredoxin]-disulfide + sulfite + AMP + 2 H(+) = adenosine 5'-phosphosulfate + [thioredoxin]-dithiol. It participates in sulfur metabolism; hydrogen sulfide biosynthesis; sulfite from sulfate. In terms of biological role, catalyzes the formation of sulfite from adenosine 5'-phosphosulfate (APS) using thioredoxin as an electron donor. The sequence is that of Adenosine 5'-phosphosulfate reductase 1 (cysH) from Bacillus subtilis (strain 168).